Consider the following 141-residue polypeptide: Nucleoside diphosphate kinase (141 aa).

Residues lysine 11, phenylalanine 59, arginine 87, threonine 93, arginine 104, and asparagine 114 each contribute to the ATP site. Histidine 117 acts as the Pros-phosphohistidine intermediate in catalysis.

Belongs to the NDK family. As to quaternary structure, homotetramer. The cofactor is Mg(2+).

The protein resides in the cytoplasm. It carries out the reaction a 2'-deoxyribonucleoside 5'-diphosphate + ATP = a 2'-deoxyribonucleoside 5'-triphosphate + ADP. The catalysed reaction is a ribonucleoside 5'-diphosphate + ATP = a ribonucleoside 5'-triphosphate + ADP. Major role in the synthesis of nucleoside triphosphates other than ATP. The ATP gamma phosphate is transferred to the NDP beta phosphate via a ping-pong mechanism, using a phosphorylated active-site intermediate. This Pseudomonas fluorescens (strain SBW25) protein is Nucleoside diphosphate kinase.